Here is a 102-residue protein sequence, read N- to C-terminus: UPF0213 protein in potE 3'region (102 aa).

Residues Ser6–Arg81 enclose the GIY-YIG domain.

This sequence belongs to the UPF0213 family.

In Serratia liquefaciens, this protein is UPF0213 protein in potE 3'region.